Here is a 644-residue protein sequence, read N- to C-terminus: Exoribonuclease 2 (644 aa).

The RNB domain maps to 189-516 (REDLTALNFV…NHRLLKAIIT (328 aa)). One can recognise an S1 motif domain in the interval 561–643 (DTRFPAEIID…ETRNVVARPV (83 aa)).

The protein belongs to the RNR ribonuclease family. RNase II subfamily.

The protein localises to the cytoplasm. The catalysed reaction is Exonucleolytic cleavage in the 3'- to 5'-direction to yield nucleoside 5'-phosphates.. Its function is as follows. Involved in mRNA degradation. Hydrolyzes single-stranded polyribonucleotides processively in the 3' to 5' direction. This is Exoribonuclease 2 from Yersinia enterocolitica serotype O:8 / biotype 1B (strain NCTC 13174 / 8081).